Reading from the N-terminus, the 306-residue chain is MSVSPVQPDPSVIGGVPKAPFVLKPNLARLFNDRASRFEALAQGSHLAPYLNFLAGITRIQSELVSALPPPEPVPADRVERARANAMPPIDRAAMGGSPDCREVLQQFFEKAEALEKPAAAAEALAQVRTADEEMLTWMIGNVMADDLPVESLAHHLYVAAAMQIQAARLAAGLDGSRLVPIRVGVCPACGGRPVASMVIGFHGAEGARYASCSCCATMWNEVRVKCLACGSTKGIGYQAVETGDEEATVKAEVCDTCNSWMKILYQNKNPSLDVVADDVASLGLDLLMKDTEYKRAGFDPFLMGY.

It belongs to the FdhE family.

The protein resides in the cytoplasm. Functionally, necessary for formate dehydrogenase activity. This Rhizobium meliloti (strain 1021) (Ensifer meliloti) protein is Protein FdhE homolog.